The chain runs to 232 residues: Fibrillarin-like rRNA/tRNA 2'-O-methyltransferase (232 aa).

Residues 89–90 (TT), 108–109 (EF), 133–134 (DA), and 153–156 (DIAQ) each bind S-adenosyl-L-methionine.

It belongs to the methyltransferase superfamily. Fibrillarin family. In terms of assembly, interacts with nop5. Component of box C/D small ribonucleoprotein (sRNP) particles that contain rpl7ae, FlpA and nop5, plus a guide RNA.

Functionally, involved in pre-rRNA and tRNA processing. Utilizes the methyl donor S-adenosyl-L-methionine to catalyze the site-specific 2'-hydroxyl methylation of ribose moieties in rRNA and tRNA. Site specificity is provided by a guide RNA that base pairs with the substrate. Methylation occurs at a characteristic distance from the sequence involved in base pairing with the guide RNA. This is Fibrillarin-like rRNA/tRNA 2'-O-methyltransferase from Saccharolobus islandicus (strain L.S.2.15 / Lassen #1) (Sulfolobus islandicus).